Consider the following 926-residue polypeptide: Tyrosine-protein phosphatase non-receptor type 4 (926 aa).

An FERM domain is found at 29–312 (VVCNILLLDN…EHHTFFRLDR (284 aa)). Disordered stretches follow at residues 379-412 (SDDR…TRVR), 429-474 (SEDF…KKNS), and 492-511 (NESF…GGIP). Polar residues-rich tracts occupy residues 398–408 (NHRNSSFTQEA) and 432–455 (FVSQ…PSQE). Phosphoserine is present on serine 474. The region spanning 517-589 (LIKMKPDENG…DQVVLFIKAS (73 aa)) is the PDZ domain. Positions 655–911 (VLAQFDQLYR…RFVCEAILKV (257 aa)) constitute a Tyrosine-protein phosphatase domain. Residues aspartate 820, 852–858 (CSAGIGR), and glutamine 896 contribute to the substrate site. Cysteine 852 serves as the catalytic Phosphocysteine intermediate.

This sequence belongs to the protein-tyrosine phosphatase family. Non-receptor class subfamily. As to expression, highly expressed in testis. Specifically expressed in spermatocytes and spermatids within seminiferous tubules (at protein level).

Its subcellular location is the cell membrane. It localises to the cytoplasm. The protein resides in the cytoskeleton. The enzyme catalyses O-phospho-L-tyrosyl-[protein] + H2O = L-tyrosyl-[protein] + phosphate. Phosphatase that plays a role in immunity, learning, synaptic plasticity or cell homeostasis. Regulates neuronal cell homeostasis by protecting neurons against apoptosis. Negatively regulates TLR4-induced interferon beta production by dephosphorylating adapter TICAM2 and inhibiting subsequent TRAM-TRIF interaction. Dephosphorylates also the immunoreceptor tyrosine-based activation motifs/ITAMs of the TCR zeta subunit and thereby negatively regulates TCR-mediated signaling pathway. May act at junctions between the membrane and the cytoskeleton. The chain is Tyrosine-protein phosphatase non-receptor type 4 (Ptpn4) from Mus musculus (Mouse).